The primary structure comprises 106 residues: MSTLLKSAKSIVPLMDRVLVQRIKAQAKTASGLYLPEKNVEKLNQAEVVAVGPGFTDANGNKVVPQVKVGDQVLIPQFGGSTIKLGNDDEVILFRDAEILAKIAKD.

Ser2 carries the post-translational modification N-acetylserine. Ser31 is subject to Phosphoserine.

Belongs to the GroES chaperonin family. In terms of assembly, homohexamer. In terms of processing, the N-terminus is blocked.

The protein resides in the mitochondrion matrix. In terms of biological role, eukaryotic CPN10 homolog which is essential for mitochondrial protein biogenesis, together with CPN60. Binds to CPN60 in the presence of Mg-ATP and suppresses the ATPase activity of the latter. This Saccharomyces cerevisiae (strain ATCC 204508 / S288c) (Baker's yeast) protein is 10 kDa heat shock protein, mitochondrial (HSP10).